The primary structure comprises 680 residues: Anosmin-1 (680 aa).

A signal peptide spans 1 to 24; sequence MVPGVPGAVLTLCLWLAASSGCLA. 5 cysteine pairs are disulfide-bonded: Cys49/Cys83, Cys53/Cys77, Cys86/Cys105, Cys90/Cys101, and Cys116/Cys120. N-linked (GlcNAc...) asparagine glycosylation is present at Asn71. The 50-residue stretch at 127 to 176 folds into the WAP domain; the sequence is LLVKQGDCPAPEKASGFAAACVESCEVDNECSGVKKCCSNGCGHTCQVPK. 4 consecutive Fibronectin type-III domains span residues 186–287, 292–400, 425–523, and 550–658; these read PRKE…SKDP, APAN…THAT, PTRP…TPPC, and KPEN…LPPS. Asn209, Asn300, Asn470, Asn553, and Asn564 each carry an N-linked (GlcNAc...) asparagine glycan. A disordered region spans residues 642 to 680; it reads EGPATIKTFRTPELPPSSAHRSHLKHRHPHHYKPSPERY. Positions 661 to 674 are enriched in basic residues; the sequence is HRSHLKHRHPHHYK.

As to quaternary structure, interacts with FGFR1; this interaction does not interfere with FGF2-binding to FGFR1. Binds heparin. Heparin may promote or interfere with ANOS1-FGFR1-FGF2 complex formation depending on the sequential order of its binding to the various constituents. For instance, heparin-ANOS1 interaction favors subsequent binding to pre-existing binary FGFR1-FGF2 complex, while heparin-FGF2 complex does not interact with ANOS1-FGFR1. N-glycosylated. In terms of processing, may be proteolytically cleaved at the cell surface and released from the cell surface. As to expression, expressed in the cerebellum (at protein level).

The protein resides in the cell membrane. It is found in the secreted. Its function is as follows. Has a dual branch-promoting and guidance activity, which may play an important role in the patterning of mitral and tufted cell collaterals to the olfactory cortex. Chemoattractant for fetal olfactory epithelial cells. This Homo sapiens (Human) protein is Anosmin-1.